The chain runs to 595 residues: Tyrosine-protein phosphatase cdcA (595 aa).

The segment at 32-57 is disordered; the sequence is TPFPYPAEQPKSPSKRRAQASPSKKR. The span at 44–57 shows a compositional bias: basic residues; sequence PSKRRAQASPSKKR. In terms of domain architecture, Tyrosine-protein phosphatase spans 233–381; sequence LPSTVSEVRS…QGSFREWWFE (149 aa). Cysteine 322 (phosphocysteine intermediate) is an active-site residue. Positions 392–595 are disordered; it reads QPNPVTPGRS…GSPVRVKAQA (204 aa). Basic residues predominate over residues 449-461; sequence RKSHRKDSRHHPY. The span at 471 to 483 shows a compositional bias: basic and acidic residues; the sequence is VDKDTRKTRRSTD. The segment covering 502–526 has biased composition (polar residues); the sequence is SKSPAASPGQRSISYSATVTASYTL.

This sequence belongs to the protein-tyrosine phosphatase family. Non-receptor class CDC14 subfamily.

The protein localises to the nucleus. Its subcellular location is the cytoplasm. It is found in the cell septum. It catalyses the reaction O-phospho-L-tyrosyl-[protein] + H2O = L-tyrosyl-[protein] + phosphate. In terms of biological role, protein phosphatase which antagonizes mitotic cyclin-dependent kinase nimX, the inactivation of which is essential for exit from mitosis. To access its substrates, is released from nucleolar sequestration during mitosis. Plays an essential in coordinating the nuclear division cycle with cytokinesis through the cytokinesis checkpoint. Involved in chromosome segregation, where it is required for meiosis I spindle dissambly as well as for establishing two consecutive chromosome segregation phases. Required for the transcription of the two major endoglucanase genes eglA and eglB and growth on synthetic cellulose as the sole carbon source. This chain is Tyrosine-protein phosphatase cdcA (cdcA), found in Emericella nidulans (strain FGSC A4 / ATCC 38163 / CBS 112.46 / NRRL 194 / M139) (Aspergillus nidulans).